The sequence spans 171 residues: UPF0398 protein MGAS9429_Spy1349 (171 aa).

Belongs to the UPF0398 family.

This Streptococcus pyogenes serotype M12 (strain MGAS9429) protein is UPF0398 protein MGAS9429_Spy1349.